The primary structure comprises 194 residues: MAIKLIVGLANPGAEYAATRHNAGAWYVDLLAERLRAPLREEPKFFGYTSRITLEGEDVRLLVPTTFMNLSGKAVGTMASFYRIQPDEILVAHDELDLPPGVAKFKLGGGHGGHNGLKDIISKLGNNPNFHRLRVGIGHPGDKNKVVGFVLGKPPVSEQKLIDEAIDEAARCTELWFKEGLAKATSRLHTFKAQ.

TRNA is bound at residue Y16. The Proton acceptor role is filled by H21. TRNA-binding residues include F67, N69, and N115.

It belongs to the PTH family. Monomer.

It is found in the cytoplasm. It carries out the reaction an N-acyl-L-alpha-aminoacyl-tRNA + H2O = an N-acyl-L-amino acid + a tRNA + H(+). Hydrolyzes ribosome-free peptidyl-tRNAs (with 1 or more amino acids incorporated), which drop off the ribosome during protein synthesis, or as a result of ribosome stalling. In terms of biological role, catalyzes the release of premature peptidyl moieties from peptidyl-tRNA molecules trapped in stalled 50S ribosomal subunits, and thus maintains levels of free tRNAs and 50S ribosomes. The protein is Peptidyl-tRNA hydrolase of Salmonella dublin (strain CT_02021853).